The sequence spans 182 residues: Large ribosomal subunit protein bL25 (182 aa).

Belongs to the bacterial ribosomal protein bL25 family. CTC subfamily. As to quaternary structure, part of the 50S ribosomal subunit; part of the 5S rRNA/L5/L18/L25 subcomplex. Contacts the 5S rRNA. Binds to the 5S rRNA independently of L5 and L18.

This is one of the proteins that binds to the 5S RNA in the ribosome where it forms part of the central protuberance. This is Large ribosomal subunit protein bL25 from Borrelia duttonii (strain Ly).